A 412-amino-acid chain; its full sequence is Serine hydroxymethyltransferase (412 aa).

Residues L117 and 121–123 each bind (6S)-5,6,7,8-tetrahydrofolate; that span reads GHL. K226 carries the N6-(pyridoxal phosphate)lysine modification. (6S)-5,6,7,8-tetrahydrofolate contacts are provided by residues E242 and 350 to 352; that span reads SPF.

The protein belongs to the SHMT family. As to quaternary structure, homodimer. The cofactor is pyridoxal 5'-phosphate.

The protein localises to the cytoplasm. It carries out the reaction (6R)-5,10-methylene-5,6,7,8-tetrahydrofolate + glycine + H2O = (6S)-5,6,7,8-tetrahydrofolate + L-serine. It functions in the pathway one-carbon metabolism; tetrahydrofolate interconversion. Its pathway is amino-acid biosynthesis; glycine biosynthesis; glycine from L-serine: step 1/1. In terms of biological role, catalyzes the reversible interconversion of serine and glycine with tetrahydrofolate (THF) serving as the one-carbon carrier. Also exhibits THF-independent aldolase activity toward beta-hydroxyamino acids, producing glycine and aldehydes, via a retro-aldol mechanism. The chain is Serine hydroxymethyltransferase from Methanosarcina acetivorans (strain ATCC 35395 / DSM 2834 / JCM 12185 / C2A).